The sequence spans 393 residues: NAD(P)H-quinone oxidoreductase subunit H, chloroplastic (393 aa).

The protein belongs to the complex I 49 kDa subunit family. As to quaternary structure, NDH is composed of at least 16 different subunits, 5 of which are encoded in the nucleus.

The protein resides in the plastid. Its subcellular location is the chloroplast thylakoid membrane. The enzyme catalyses a plastoquinone + NADH + (n+1) H(+)(in) = a plastoquinol + NAD(+) + n H(+)(out). The catalysed reaction is a plastoquinone + NADPH + (n+1) H(+)(in) = a plastoquinol + NADP(+) + n H(+)(out). In terms of biological role, NDH shuttles electrons from NAD(P)H:plastoquinone, via FMN and iron-sulfur (Fe-S) centers, to quinones in the photosynthetic chain and possibly in a chloroplast respiratory chain. The immediate electron acceptor for the enzyme in this species is believed to be plastoquinone. Couples the redox reaction to proton translocation, and thus conserves the redox energy in a proton gradient. The sequence is that of NAD(P)H-quinone oxidoreductase subunit H, chloroplastic from Spinacia oleracea (Spinach).